A 242-amino-acid chain; its full sequence is Methylthioribulose-1-phosphate dehydratase (242 aa).

Residues 1-23 (MTDQREEPQGSNDHLVRSSDPEH) are disordered. Residue cysteine 102 coordinates substrate. Zn(2+) contacts are provided by histidine 119 and histidine 121. The Proton donor/acceptor role is filled by glutamate 148. Histidine 204 is a Zn(2+) binding site.

This sequence belongs to the aldolase class II family. MtnB subfamily. The cofactor is Zn(2+).

The protein localises to the cytoplasm. The enzyme catalyses 5-(methylsulfanyl)-D-ribulose 1-phosphate = 5-methylsulfanyl-2,3-dioxopentyl phosphate + H2O. It functions in the pathway amino-acid biosynthesis; L-methionine biosynthesis via salvage pathway; L-methionine from S-methyl-5-thio-alpha-D-ribose 1-phosphate: step 2/6. Functionally, catalyzes the dehydration of methylthioribulose-1-phosphate (MTRu-1-P) into 2,3-diketo-5-methylthiopentyl-1-phosphate (DK-MTP-1-P). This is Methylthioribulose-1-phosphate dehydratase from Uncinocarpus reesii (strain UAMH 1704).